The sequence spans 560 residues: Cilia- and flagella-associated protein 184 (560 aa).

The segment covering 1–12 (MEGGSEHTKDPG) has biased composition (basic and acidic residues). The segment at 1–209 (MEGGSEHTKD…QEEGKPLGGR (209 aa)) is disordered. Acidic residues-rich tracts occupy residues 41–61 (GELE…EEEA) and 101–110 (EPEEPAEAGA). 2 stretches are compositionally biased toward basic and acidic residues: residues 127 to 144 (AEAR…KEVR) and 179 to 209 (ETRR…LGGR). 2 coiled-coil regions span residues 357–481 (QAAL…QGRD) and 510–536 (DSLL…LKRH).

It belongs to the CFAP184 family. As to quaternary structure, forms a complex with CFAP263; the interaction is required for functional activity in cilia.

The protein resides in the cell projection. The protein localises to the cilium. Its subcellular location is the cytoplasm. It localises to the cytoskeleton. It is found in the microtubule organizing center. The protein resides in the centrosome. In terms of biological role, in complex with CFAP263, acts as a regulator of ciliary beating that connects radial spoke 3 (RS3) to the inner dynein arm (IDA) and the nexin-dynein regulatory complex (N-DRC). The complex is positioned parallel to N-DRC and forms a connection between the arch at the base of RS3, the IDA tail and N-DRC. The chain is Cilia- and flagella-associated protein 184 (CFAP184) from Macaca fascicularis (Crab-eating macaque).